The following is an 812-amino-acid chain: Probable inorganic carbon transporter subunit DabA (812 aa).

Residues cysteine 337, aspartate 339, histidine 499, and cysteine 514 each contribute to the Zn(2+) site.

It belongs to the inorganic carbon transporter (TC 9.A.2) DabA family. In terms of assembly, forms a complex with DabB. It depends on Zn(2+) as a cofactor.

It localises to the cell inner membrane. Part of an energy-coupled inorganic carbon pump. This chain is Probable inorganic carbon transporter subunit DabA, found in Xanthomonas oryzae pv. oryzae (strain MAFF 311018).